The sequence spans 634 residues: 1,4-alpha-glucan branching enzyme GlgB (634 aa).

The active-site Nucleophile is aspartate 305. The Proton donor role is filled by glutamate 357.

It belongs to the glycosyl hydrolase 13 family. GlgB subfamily. Monomer.

The catalysed reaction is Transfers a segment of a (1-&gt;4)-alpha-D-glucan chain to a primary hydroxy group in a similar glucan chain.. Its pathway is glycan biosynthesis; glycogen biosynthesis. Functionally, catalyzes the formation of the alpha-1,6-glucosidic linkages in glycogen by scission of a 1,4-alpha-linked oligosaccharide from growing alpha-1,4-glucan chains and the subsequent attachment of the oligosaccharide to the alpha-1,6 position. The chain is 1,4-alpha-glucan branching enzyme GlgB from Lactiplantibacillus plantarum (strain ATCC BAA-793 / NCIMB 8826 / WCFS1) (Lactobacillus plantarum).